A 483-amino-acid chain; its full sequence is 5-hydroxytryptamine receptor 3A (483 aa).

An N-terminal signal peptide occupies residues 1–23 (MPLCIPQVLLALFLSVLIAQGEG). The Extracellular portion of the chain corresponds to 24–246 (SRRRATQAHS…MKFYVVIRRR (223 aa)). Asparagine 109, asparagine 175, and asparagine 191 each carry an N-linked (GlcNAc...) asparagine glycan. A disulfide bridge connects residues cysteine 162 and cysteine 176. A helical membrane pass occupies residues 247 to 273 (PLFYAVSLLLPSIFLMVVDIVGFCLPP). The Cytoplasmic segment spans residues 274–278 (DSGER). The helical transmembrane segment at 279 to 297 (VSFKITLLLGYSVFLIIVS) threads the bilayer. Residues 298 to 307 (DTLPATAIGT) are Extracellular-facing. The chain crosses the membrane as a helical span at residues 308–326 (PLIGVYFVVCMALLVISLA). Over 327–460 (ETIFIVQLVH…GYVLDRLLFR (134 aa)) the chain is Cytoplasmic. Residues 393 to 414 (VGSPQDLEKTSRSRDSPLPPPR) form a disordered region. Residues 398–407 (DLEKTSRSRD) are compositionally biased toward basic and acidic residues. Residues 419–455 (AVRGLLQELSSIRHSLEKRDEMREVARDWLRVGYVLD) form an HA-stretch; determines single-channel conductance in 5-HT3 receptors region. The chain crosses the membrane as a helical span at residues 461–480 (IYLLAVLAYSITLVTLWSIW). Topologically, residues 481-483 (HYS) are extracellular.

This sequence belongs to the ligand-gated ion channel (TC 1.A.9) family. 5-hydroxytryptamine receptor (TC 1.A.9.2) subfamily. HTR3A sub-subfamily. Forms homopentameric as well as heteropentameric serotonin-activated cation-selective channel complexes with HTR3B or HTR3C or HTR3D or HTR3E. The homomeric complex is functional but exhibits low conductance with modified voltage dependence, and decreased agonist and antagonist affinity. Heteropentameric complexes display properties which resemble that of neuronal serotonin-activated channels in vivo. Interacts with RIC3. Expressed in central and peripheral neurons.

The protein resides in the postsynaptic cell membrane. Its subcellular location is the cell membrane. It catalyses the reaction Na(+)(in) = Na(+)(out). The catalysed reaction is K(+)(in) = K(+)(out). The enzyme catalyses Ca(2+)(in) = Ca(2+)(out). It carries out the reaction Mg(2+)(in) = Mg(2+)(out). In terms of biological role, forms serotonin (5-hydroxytryptamine/5-HT3)-activated cation-selective channel complexes, which when activated cause fast, depolarizing responses in neurons. In Rattus norvegicus (Rat), this protein is 5-hydroxytryptamine receptor 3A.